A 133-amino-acid chain; its full sequence is ATP synthase epsilon chain, chloroplastic (133 aa).

This sequence belongs to the ATPase epsilon chain family. In terms of assembly, F-type ATPases have 2 components, CF(1) - the catalytic core - and CF(0) - the membrane proton channel. CF(1) has five subunits: alpha(3), beta(3), gamma(1), delta(1), epsilon(1). CF(0) has three main subunits: a, b and c.

It is found in the plastid. It localises to the chloroplast thylakoid membrane. Its function is as follows. Produces ATP from ADP in the presence of a proton gradient across the membrane. This chain is ATP synthase epsilon chain, chloroplastic, found in Thalassiosira pseudonana (Marine diatom).